The following is a 352-amino-acid chain: Ferrochelatase (352 aa).

Residues H222 and E303 each coordinate Fe cation.

This sequence belongs to the ferrochelatase family.

The protein resides in the cytoplasm. The enzyme catalyses heme b + 2 H(+) = protoporphyrin IX + Fe(2+). It participates in porphyrin-containing compound metabolism; protoheme biosynthesis; protoheme from protoporphyrin-IX: step 1/1. In terms of biological role, catalyzes the ferrous insertion into protoporphyrin IX. The protein is Ferrochelatase of Brucella canis (strain ATCC 23365 / NCTC 10854 / RM-666).